We begin with the raw amino-acid sequence, 162 residues long: tRNA-specific adenosine deaminase (162 aa).

Residues 3–115 (DSDKYFMKCA…KNLQKYICCK (113 aa)) enclose the CMP/dCMP-type deaminase domain. Residue H54 participates in Zn(2+) binding. The active-site Proton donor is the E56. Zn(2+)-binding residues include C84 and C87.

The protein belongs to the cytidine and deoxycytidylate deaminase family. In terms of assembly, homodimer. The cofactor is Zn(2+).

It carries out the reaction adenosine(34) in tRNA + H2O + H(+) = inosine(34) in tRNA + NH4(+). Its function is as follows. Catalyzes the deamination of adenosine to inosine at the wobble position 34 of tRNA(Arg2). The protein is tRNA-specific adenosine deaminase of Buchnera aphidicola subsp. Baizongia pistaciae (strain Bp).